The chain runs to 240 residues: Uridylate kinase (240 aa).

13–16 (KASG) contributes to the ATP binding site. Residues 21-26 (GSQGFG) are involved in allosteric activation by GTP. Residue Gly55 participates in UMP binding. 2 residues coordinate ATP: Gly56 and Arg60. Residues Asp75 and 136 to 143 (TGNPFFTT) contribute to the UMP site. Residues Thr163, Gln164, Tyr169, and Asp172 each contribute to the ATP site.

Belongs to the UMP kinase family. In terms of assembly, homohexamer.

It is found in the cytoplasm. The catalysed reaction is UMP + ATP = UDP + ADP. The protein operates within pyrimidine metabolism; CTP biosynthesis via de novo pathway; UDP from UMP (UMPK route): step 1/1. Allosterically activated by GTP. Inhibited by UTP. Functionally, catalyzes the reversible phosphorylation of UMP to UDP. The protein is Uridylate kinase of Brucella suis biovar 1 (strain 1330).